Here is a 660-residue protein sequence, read N- to C-terminus: MTEENKSFYITTPIYYPSGKLHIGHAYTTVAGDAMARYKCMQGYNVHYLTGTDEHGQKIQKKAEELNVTPQAYVDNIVAGIKELWEKMDISYDDFIRTTEDRHKDVVEKIFKQLVDQGDIYLDEYEGWYSVQDETFYTEHQLVDPIMEGDKVVGGKSPDSGHDVELVREESYFFRMGKYVDRLLKFYEDNPHFIQPESRKNEMINNFIKPGLEDLAVSRTSFDWGVRVPGNPKHVIYVWVDALSNYITALGYGTENEEMYKKFWPADVHLVGKEIVRFHTIYWPIILMALDLPLPKKVFAHGWILMKDGKMSKSKGNVVDPVILIDRYGLDALRYYLLREVPFGSDGVFTPEGFVERINFDLANDLGNLLNRTVAMIDKYFNGEIPAFKANVTEFDETLVTFAKDTLKKVEEAMENMEFSVALSSIWQLVSRTNKYIDETQPWVLAKDEDDREKLASVMAHLAEVLRQTGIMLMPFLTVAPSKMFAQLGLTDEAHTSWGSLSTIGCIPAGTKVEKGQPIFPRLEMDVEVAYIKEQMKASAPKVEEKKEEEPKAEEITIDDFFKVELRVAEVLSAEPVKKADKLLKIQLDLGTEKRQVVSGIAKFYSPEDLKGKKVICVTNLKPVKLRGELSQGMILAGEENGVLSLASIDQNIPNGTKIK.

The short motif at 15–25 is the 'HIGH' region element; the sequence is YYPSGKLHIGH. A 'KMSKS' region motif is present at residues 310–314; the sequence is KMSKS. Lys313 serves as a coordination point for ATP. Residues 560-660 enclose the tRNA-binding domain; sequence DFFKVELRVA…QNIPNGTKIK (101 aa).

This sequence belongs to the class-I aminoacyl-tRNA synthetase family. MetG type 2B subfamily. As to quaternary structure, homodimer.

It localises to the cytoplasm. The enzyme catalyses tRNA(Met) + L-methionine + ATP = L-methionyl-tRNA(Met) + AMP + diphosphate. In terms of biological role, is required not only for elongation of protein synthesis but also for the initiation of all mRNA translation through initiator tRNA(fMet) aminoacylation. The chain is Methionine--tRNA ligase 1 from Bacillus anthracis.